A 366-amino-acid polypeptide reads, in one-letter code: 3-dehydroquinate synthase (366 aa).

NAD(+) contacts are provided by residues 71 to 76 (DGEKYK), 105 to 109 (GVIGD), 129 to 130 (TT), Lys-142, Lys-151, and 169 to 172 (TLQT). Residues Glu-184, His-247, and His-264 each coordinate Zn(2+).

The protein belongs to the sugar phosphate cyclases superfamily. Dehydroquinate synthase family. Requires Co(2+) as cofactor. Zn(2+) serves as cofactor. It depends on NAD(+) as a cofactor.

The protein resides in the cytoplasm. The catalysed reaction is 7-phospho-2-dehydro-3-deoxy-D-arabino-heptonate = 3-dehydroquinate + phosphate. It participates in metabolic intermediate biosynthesis; chorismate biosynthesis; chorismate from D-erythrose 4-phosphate and phosphoenolpyruvate: step 2/7. In terms of biological role, catalyzes the conversion of 3-deoxy-D-arabino-heptulosonate 7-phosphate (DAHP) to dehydroquinate (DHQ). This Actinobacillus pleuropneumoniae serotype 5b (strain L20) protein is 3-dehydroquinate synthase.